The sequence spans 82 residues: ATP synthase subunit c, chloroplastic (82 aa).

Helical transmembrane passes span 3 to 23 and 57 to 77; these read PIVA…AAIG and FAFM…LLFA.

It belongs to the ATPase C chain family. As to quaternary structure, F-type ATPases have 2 components, F(1) - the catalytic core - and F(0) - the membrane proton channel. F(1) has five subunits: alpha(3), beta(3), gamma(1), delta(1), epsilon(1). F(0) has four main subunits: a(1), b(1), b'(1) and c(10-14). The alpha and beta chains form an alternating ring which encloses part of the gamma chain. F(1) is attached to F(0) by a central stalk formed by the gamma and epsilon chains, while a peripheral stalk is formed by the delta, b and b' chains.

It is found in the plastid. Its subcellular location is the chloroplast thylakoid membrane. Functionally, f(1)F(0) ATP synthase produces ATP from ADP in the presence of a proton or sodium gradient. F-type ATPases consist of two structural domains, F(1) containing the extramembraneous catalytic core and F(0) containing the membrane proton channel, linked together by a central stalk and a peripheral stalk. During catalysis, ATP synthesis in the catalytic domain of F(1) is coupled via a rotary mechanism of the central stalk subunits to proton translocation. In terms of biological role, key component of the F(0) channel; it plays a direct role in translocation across the membrane. A homomeric c-ring of between 10-14 subunits forms the central stalk rotor element with the F(1) delta and epsilon subunits. This chain is ATP synthase subunit c, chloroplastic, found in Chlorella vulgaris (Green alga).